The sequence spans 448 residues: uncharacterized protein (448 aa).

A compositionally biased stretch (polar residues) spans proline 428–aspartate 440. Residues proline 428 to glycine 448 form a disordered region.

This is an uncharacterized protein from Mycoplasma pneumoniae (strain ATCC 29342 / M129 / Subtype 1) (Mycoplasmoides pneumoniae).